Reading from the N-terminus, the 143-residue chain is GAFIMPGTLWCGAGNAASDYSQLGTEKDTDMCCRDHDHCENWISALEYKHGMRNYYPSTISHCDCDNQFRSCLMKLKDGTADYVGQTYFNVLKIPCFELEEGEGCVDWNFWLECTESKIMPVAKLVSAAPYQAQAETQSGEGR.

Ca(2+) is bound by residues Trp-10, Gly-12, and Gly-14. Intrachain disulfides connect Cys-11–Cys-33, Cys-32–Cys-72, and Cys-39–Cys-65. Residue His-36 is part of the active site. Asp-37 is a Ca(2+) binding site.

This sequence belongs to the phospholipase A2 family. Group III subfamily. Requires Ca(2+) as cofactor. Expressed by the venom gland.

Its subcellular location is the secreted. The catalysed reaction is a 1,2-diacyl-sn-glycero-3-phosphocholine + H2O = a 1-acyl-sn-glycero-3-phosphocholine + a fatty acid + H(+). In terms of biological role, PLA2 catalyzes the calcium-dependent hydrolysis of the 2-acyl groups in 3-sn-phosphoglycerides. In Heloderma suspectum (Gila monster), this protein is Phospholipase A2 isozymes PA3A/PA3B/PA5.